The sequence spans 85 residues: Cell division topological specificity factor (85 aa).

Belongs to the MinE family.

Prevents the cell division inhibition by proteins MinC and MinD at internal division sites while permitting inhibition at polar sites. This ensures cell division at the proper site by restricting the formation of a division septum at the midpoint of the long axis of the cell. The chain is Cell division topological specificity factor from Cellvibrio japonicus (strain Ueda107) (Pseudomonas fluorescens subsp. cellulosa).